A 526-amino-acid chain; its full sequence is Choline/ethanolamine transporter FLVCR2 (526 aa).

Positions 1–70 (MVNEGPNQEE…PSGLAHPSSS (70 aa)) are disordered. Topologically, residues 1 to 76 (MVNEGPNQEE…PSSSGPEDLS (76 aa)) are cytoplasmic. 1 to 84 (MVNEGPNQEE…LSVIKVSRRR (84 aa)) is a binding site for heme b. 5 tandem repeats follow at residues 25-30 (PSVSVH), 31-36 (PSVSVH), 37-42 (PSVSIN), 43-48 (PSVSVH), and 49-54 (PSSSAH). Positions 25–56 (PSVSVHPSVSVHPSVSINPSVSVHPSSSAHPS) are enriched in low complexity. The tract at residues 25–72 (PSVSVHPSVSVHPSVSINPSVSVHPSSSAHPSALAQPSGLAHPSSSGP) is 8 X 6 AA tandem repeats of P-S-[VS]-S-[VIAG]-[HNP]. The stretch at 55 to 60 (PSALAQ) is one 6; approximate repeat. The 7; approximate repeat unit spans residues 61 to 66 (PSGLAH). Copy 8 of the repeat occupies 67–72 (PSSSGP). Residues 77–101 (VIKVSRRRWAVVLVFSCYSMCNSFQ) form a helical membrane-spanning segment. Residues Asn98 and Trp102 each contribute to the choline site. Topologically, residues 102–119 (WIQYGSINNIFMHFYGVS) are extracellular. The helical transmembrane segment at 120-147 (AFAIDWLSMCYMLTYIPLLLPVAWLLEK) threads the bilayer. Residues 148–149 (FG) lie on the Cytoplasmic side of the membrane. Residues 150 to 169 (LRTIALTGSALNCLGAWVKL) form a helical membrane-spanning segment. Over 170 to 176 (GSLKPHL) the chain is Extracellular. The chain crosses the membrane as a helical span at residues 177 to 205 (FPVTVVGQLICSVAQVFILGMPSRIASVW). Residues Gln191 and Leu195 each contribute to the choline site. Residues 206–210 (FGANE) lie on the Cytoplasmic side of the membrane. The chain crosses the membrane as a helical span at residues 211–236 (VSTACSVAVFGNQLGIAIGFLVPPVL). Residues 237 to 241 (VPNIE) are Extracellular-facing. A helical membrane pass occupies residues 242 to 271 (DRDELAYHISIMFYIIGGVATLLLILVIIV). The Cytoplasmic segment spans residues 272–307 (FKEKPKYPPSRAQSLSYALTSPDASYLGSIARLFKN). Residues 308-338 (LNFVLLVITYGLNAGAFYALSTLLNRMVIWH) traverse the membrane as a helical segment. Tyr325 contributes to the choline binding site. The Extracellular portion of the chain corresponds to 339 to 342 (YPGE). Residues 343 to 371 (EVNAGRIGLTIVIAGMLGAVISGIWLDRS) traverse the membrane as a helical segment. Over 372–373 (KT) the chain is Cytoplasmic. A helical membrane pass occupies residues 374-396 (YKETTLVVYIMTLVGMVVYTFTL). Residues 397 to 399 (NLG) lie on the Extracellular side of the membrane. A helical membrane pass occupies residues 400–429 (HLWVVFITAGTMGFFMTGYLPLGFEFAVEL). At 430–437 (TYPESEGI) the chain is on the cytoplasmic side. The chain crosses the membrane as a helical span at residues 438 to 463 (SSGLLNISAQVFGIIFTISQGQIIDN). Gln447 is a binding site for choline. Residues 464 to 465 (YG) lie on the Extracellular side of the membrane. A helical membrane pass occupies residues 466 to 488 (TKPGNIFLCVFLTLGAALTAFIK). The Cytoplasmic segment spans residues 489–526 (ADLRRQKANKETLENKLQEEEEESNTSKVPTAVSEDHL). Positions 500–526 (TLENKLQEEEEESNTSKVPTAVSEDHL) are disordered. Ser515 bears the Phosphoserine mark.

The protein belongs to the major facilitator superfamily. Feline leukemia virus subgroup C receptor (TC 2.A.1.28.1) family. In terms of assembly, interacts with components of electron transfer chain complexes III, IV and V including CYC1, NDUFA4, COX4I1, ATP5PD and ATP5F1C; these interactions occur in the absence of heme and are disrupted upon heme binding. Interacts with ATP2A2; this interaction occurs in the absence of heme and promotes ATP2A2 proteasomal degradation; the complex is dissociated upon heme binding. Interacts with HMOX1; this interaction is potentiated in the presence of heme. Expressed in non-hematopoietic tissues, with relative abundant expression in brain, placenta, lung, liver and kidney. Also expressed in hematopoietic tissues (fetal liver, spleen, lymph node, thymus, leukocytes and bone marrow). Found in acidophil cells of the pituitary that secrete growth hormone and prolactin (at protein level).

It localises to the cell membrane. It is found in the mitochondrion membrane. The protein localises to the endoplasmic reticulum membrane. The enzyme catalyses choline(out) = choline(in). It catalyses the reaction ethanolamine(in) = ethanolamine(out). The catalysed reaction is heme b(in) = heme b(out). In terms of biological role, choline uniporter that specifically mediates choline uptake at the blood-brain-barrier. Responsible for the majority of choline uptake across the blood-brain-barrier from the circulation into the brain. Choline, a nutrient critical for brain development, is a precursor of phosphatidylcholine, as well as betaine. Also mediates transport of ethanolamine. Choline and ethanolamine transport is not coupled with proton transport and is exclusively driven by the choline gradient across the plasma membrane. However, the presence of an inwardly directed proton gradient enhances choline uptake. Also acts as a heme b transporter. Required to regulate mitochondrial respiration processes, ATP synthesis and thermogenesis. At low heme levels, interacts with components of electron transfer chain (ETC) complexes and ATP2A2, leading to ubiquitin-mediated degradation of ATP2A2 and inhibition of thermogenesis. Upon heme binding, dissociates from ETC complexes to allow switching from mitochondrial ATP synthesis to thermogenesis. This chain is Choline/ethanolamine transporter FLVCR2, found in Homo sapiens (Human).